Reading from the N-terminus, the 101-residue chain is Interleukin-8 (101 aa).

A signal peptide spans 1 to 22; the sequence is MNSKLAVALLATFLLSLTLCEA. The residue at position 27 (Arg-27) is a Citrulline. Cystine bridges form between Cys-34–Cys-61 and Cys-36–Cys-77.

This sequence belongs to the intercrine alpha (chemokine CxC) family. In terms of assembly, homodimer. Interacts with TNFAIP6 (via Link domain); this interaction interferes with chemokine binding to glycosaminoglycans. Post-translationally, citrullination at Arg-27 prevents proteolysis, and dampens tissue inflammation, it also enhances leukocytosis, possibly through impaired chemokine clearance from the blood circulation.

Its subcellular location is the secreted. Chemotactic factor that mediates inflammatory response by attracting neutrophils, basophils, and T-cells to clear pathogens and protect the host from infection. Also plays an important role in neutrophil activation. Released in response to an inflammatory stimulus, exerts its effect by binding to the G-protein-coupled receptors CXCR1 and CXCR2, primarily found in neutrophils, monocytes and endothelial cells. G-protein heterotrimer (alpha, beta, gamma subunits) constitutively binds to CXCR1/CXCR2 receptor and activation by IL8 leads to beta and gamma subunits release from Galpha (GNAI2 in neutrophils) and activation of several downstream signaling pathways including PI3K and MAPK pathways. The polypeptide is Interleukin-8 (CXCL8) (Oryctolagus cuniculus (Rabbit)).